The chain runs to 341 residues: Very-long-chain 3-oxoacyl-CoA reductase (341 aa).

Residues 22-42 (AVTGFLLVGIASFAAPLISTI) traverse the membrane as a helical segment. The NADP(+) site is built by Leu-67, Asp-123, Asp-131, Asn-150, Tyr-217, Lys-221, Val-250, and Thr-252. The active-site Proton donor is the Tyr-217. The active-site Lowers pKa of active site Tyr is Lys-221.

This sequence belongs to the short-chain dehydrogenases/reductases (SDR) family.

It is found in the endoplasmic reticulum membrane. The catalysed reaction is a very-long-chain (3R)-3-hydroxyacyl-CoA + NADP(+) = a very-long-chain 3-oxoacyl-CoA + NADPH + H(+). Its pathway is lipid metabolism; fatty acid biosynthesis. Functionally, component of the microsomal membrane bound fatty acid elongation system, which produces the 26-carbon very long-chain fatty acids (VLCFA) from palmitate. Catalyzes the reduction of the 3-ketoacyl-CoA intermediate that is formed in each cycle of fatty acid elongation. VLCFAs serve as precursors for ceramide and sphingolipids. The polypeptide is Very-long-chain 3-oxoacyl-CoA reductase (Pyrenophora tritici-repentis (strain Pt-1C-BFP) (Wheat tan spot fungus)).